The sequence spans 240 residues: UDP-2,3-diacylglucosamine hydrolase (240 aa).

Residues aspartate 9, histidine 11, aspartate 43, asparagine 81, and histidine 116 each contribute to the Mn(2+) site. Residue 81–82 (NR) coordinates substrate. The substrate site is built by aspartate 124, serine 162, lysine 166, lysine 169, and histidine 197. Mn(2+)-binding residues include histidine 197 and histidine 199.

The protein belongs to the LpxH family. It depends on Mn(2+) as a cofactor.

It localises to the cell inner membrane. It catalyses the reaction UDP-2-N,3-O-bis[(3R)-3-hydroxytetradecanoyl]-alpha-D-glucosamine + H2O = 2-N,3-O-bis[(3R)-3-hydroxytetradecanoyl]-alpha-D-glucosaminyl 1-phosphate + UMP + 2 H(+). It functions in the pathway glycolipid biosynthesis; lipid IV(A) biosynthesis; lipid IV(A) from (3R)-3-hydroxytetradecanoyl-[acyl-carrier-protein] and UDP-N-acetyl-alpha-D-glucosamine: step 4/6. Functionally, hydrolyzes the pyrophosphate bond of UDP-2,3-diacylglucosamine to yield 2,3-diacylglucosamine 1-phosphate (lipid X) and UMP by catalyzing the attack of water at the alpha-P atom. Involved in the biosynthesis of lipid A, a phosphorylated glycolipid that anchors the lipopolysaccharide to the outer membrane of the cell. In Neisseria gonorrhoeae (strain ATCC 700825 / FA 1090), this protein is UDP-2,3-diacylglucosamine hydrolase.